Reading from the N-terminus, the 674-residue chain is UvrABC system protein C (674 aa).

A GIY-YIG domain is found at 16–95; sequence TNPGVYRFRD…IKEFKPRFNV (80 aa). In terms of domain architecture, UVR spans 207–242; sequence KRFTNKLEKQMAAAVARLDYEQAARIRDDITALRKV.

The protein belongs to the UvrC family. In terms of assembly, interacts with UvrB in an incision complex.

The protein resides in the cytoplasm. Functionally, the UvrABC repair system catalyzes the recognition and processing of DNA lesions. UvrC both incises the 5' and 3' sides of the lesion. The N-terminal half is responsible for the 3' incision and the C-terminal half is responsible for the 5' incision. This is UvrABC system protein C from Pseudarthrobacter chlorophenolicus (strain ATCC 700700 / DSM 12829 / CIP 107037 / JCM 12360 / KCTC 9906 / NCIMB 13794 / A6) (Arthrobacter chlorophenolicus).